Here is a 1030-residue protein sequence, read N- to C-terminus: uncharacterized protein (1030 aa).

The SWIM-type zinc finger occupies 51–86 (IKVSFTAKDGELTCKCSCLANVDNCVHIVAVLLKYH). In terms of domain architecture, Helicase ATP-binding spans 590 to 751 (RGLEENKFGG…WSCFDFVLPS (162 aa)). ATP is bound at residue 603–610 (DEMGLGKT). A DEAQ box motif is present at residues 702–705 (DEAQ). Residues 867-1021 (ALEIIHEAIE…EDVNFFESLT (155 aa)) form the Helicase C-terminal domain.

It belongs to the SNF2/RAD54 helicase family.

This is an uncharacterized protein from Mycoplasma pneumoniae (strain ATCC 29342 / M129 / Subtype 1) (Mycoplasmoides pneumoniae).